The chain runs to 377 residues: Transcription factor SOX-18 (377 aa).

The tract at residues 1–76 (MQRSPPGYGA…GRGERQTADE (76 aa)) is disordered. 2 stretches are compositionally biased toward low complexity: residues 21–34 (AWAP…EARG) and 41–52 (SPTSPASPSSLP). Residues 79-147 (IRRPMNAFMV…QHLRDHPNYK (69 aa)) constitute a DNA-binding region (HMG box). 2 interaction with DNA regions span residues 81–94 (RPMN…KDER) and 105–117 (HNAV…GKAW). The tract at residues 160–225 (RRLEPGLLLP…GLEPGEASFF (66 aa)) is important for transcriptional activation. A Sox C-terminal domain is found at 256-376 (GAPLAEALRT…SAVYYSACIS (121 aa)). Residues 318-326 (TEFDQYLNC) carry the 9aaTAD motif.

In terms of assembly, interacts (via C-terminus) with MEF2C (via MADS box). In terms of tissue distribution, detected in adult lung, heart and skeletal muscles.

It is found in the nucleus. Functionally, transcriptional activator that binds to the consensus sequence 5'-AACAAAG-3' in the promoter of target genes and plays an essential role in embryonic cardiovascular development and lymphangiogenesis. Activates transcription of PROX1 and other genes coding for lymphatic endothelial markers. Plays an essential role in triggering the differentiation of lymph vessels, but is not required for the maintenance of differentiated lymphatic endothelial cells. Plays an important role in postnatal angiogenesis, where it is functionally redundant with SOX17. Interaction with MEF2C enhances transcriptional activation. Besides, required for normal hair development. The protein is Transcription factor SOX-18 (Sox18) of Mus musculus (Mouse).